The primary structure comprises 403 residues: RILP-like protein 1 (403 aa).

Residue Ser-7 is modified to Phosphoserine. An RH1 domain is found at 10–97; it reads AAESALEKNV…RLERMDRIEK (88 aa). The residue at position 47 (Cys-47) is an S-nitrosocysteine. Positions 76–265 form a coiled coil; it reads ELDELRLELD…GELNQNGEEE (190 aa). The 66-residue stretch at 291-356 folds into the RH2 domain; that stretch reads RPRFTLQELR…PQPESGIKRL (66 aa). Residues 329 to 348 form a disordered region; that stretch reads EEENQIPQPPPIAHPRMSPQ.

The protein belongs to the RILPL family. Interacts (when S-nitrosylated) with GAPDH. Interacts with RAB8A; interaction is dependent on the phosphorylation of 'Thr-72' of RAB8A. Interacts with RAB10 and RAB12; the interaction is dependent on the phosphorylation of 'Thr-73' of RAB10, and 'Ser-105' of RAB12. Post-translationally, S-nitrosylation is required for the interaction with GAPDH.

It localises to the cytoplasm. It is found in the cytosol. The protein localises to the cytoskeleton. Its subcellular location is the microtubule organizing center. The protein resides in the centrosome. It localises to the centriole. It is found in the cilium basal body. Plays a role in the regulation of cell shape and polarity. Plays a role in cellular protein transport, including protein transport away from primary cilia. Neuroprotective protein, which acts by sequestring GAPDH in the cytosol and prevent the apoptotic function of GAPDH in the nucleus. Competes with SIAH1 for binding GAPDH. Does not regulate lysosomal morphology and distribution. Binds to RAB10 following LRRK2-mediated RAB10 phosphorylation which leads to inhibition of ciliogenesis. This chain is RILP-like protein 1 (RILPL1), found in Bos taurus (Bovine).